The chain runs to 201 residues: Recombination protein RecR (201 aa).

The C4-type zinc-finger motif lies at 60-75 (CSCCGNVDTIDPCTVC). In terms of domain architecture, Toprim spans 83–178 (SMIIVVEDVS…KTTRLAHGVP (96 aa)).

It belongs to the RecR family.

Functionally, may play a role in DNA repair. It seems to be involved in an RecBC-independent recombinational process of DNA repair. It may act with RecF and RecO. This chain is Recombination protein RecR, found in Allorhizobium ampelinum (strain ATCC BAA-846 / DSM 112012 / S4) (Agrobacterium vitis (strain S4)).